The following is a 77-amino-acid chain: Apelin (77 aa).

Residues 1–22 form the signal peptide; the sequence is MNLRRCVQALLLLWLCLSAVCG. A propeptide spanning residues 23–41 is cleaved from the precursor; that stretch reads GPLLQTSDGKEMEEGTIRY. The segment at 43 to 77 is disordered; that stretch reads VQPRGPRSGPGPWQGGRRKFRRQRPRLSHKGPMPF. The segment covering 58–71 has biased composition (basic residues); the sequence is GRRKFRRQRPRLSH. Gln-65 carries the pyrrolidone carboxylic acid modification.

Belongs to the apelin family. In terms of processing, at least 5 active peptides may be produced by proteolytic processing of the peptide precursor.

The protein resides in the secreted. Its subcellular location is the extracellular space. Functionally, peptide hormone that functions as endogenous ligand for the G-protein-coupled apelin receptor (APLNR/APJ), that plays a role in cadiovascular homeostasis. Functions as a balanced agonist activating both G(i) protein pathway and beta-arrestin pathway of APLNR. Downstream G proteins activation, apelin can inhibit cAMP production and activate key intracellular effectors such as ERKs. On the other hand, APLNR activation induces beta-arrestin recruitment to the membrane leading to desensitization and internalization of the receptor. Apelin blunts cardiac hypertrophic induction from APLNR on response to pathological stimuli, but also induces myocardial hypertrophy under normal conditions. Apelin-36 dissociates more hardly than (pyroglu)apelin-13 from APLNR. Involved in the regulation of cardiac precursor cell movements during gastrulation and heart morphogenesis. Has an inhibitory effect on cytokine production in response to T-cell receptor/CD3 cross-linking; the oral intake of apelin in the colostrum and the milk might therefore modulate immune responses in neonates. Plays a role in early coronary blood vessels formation. Mediates myocardial contractility in an ERK1/2-dependent manner. May also have a role in the central control of body fluid homeostasis by influencing vasopressin release and drinking behavior. This Bos taurus (Bovine) protein is Apelin (APLN).